Reading from the N-terminus, the 204-residue chain is Transcription factor bHLH120 (204 aa).

2 disordered regions span residues 1–27 (MNPS…KKEK) and 93–116 (KREI…RSEP). One can recognise a bHLH domain in the interval 26–78 (EKKLLHRNIERQRRQEMAILFASLRSQLPLKYIKGKRAMSDHVNGAVSFIKDT).

As to quaternary structure, homodimer.

The protein resides in the nucleus. The polypeptide is Transcription factor bHLH120 (BHLH120) (Arabidopsis thaliana (Mouse-ear cress)).